The following is a 303-amino-acid chain: N-acetyl-D-glucosamine kinase (303 aa).

ATP contacts are provided by residues 4-11 (GFDIGGTK) and 133-140 (GVGGGLVL). Residues histidine 157, cysteine 177, cysteine 179, and cysteine 184 each coordinate Zn(2+).

It belongs to the ROK (NagC/XylR) family. NagK subfamily.

The enzyme catalyses N-acetyl-D-glucosamine + ATP = N-acetyl-D-glucosamine 6-phosphate + ADP + H(+). The protein operates within cell wall biogenesis; peptidoglycan recycling. Functionally, catalyzes the phosphorylation of N-acetyl-D-glucosamine (GlcNAc) derived from cell-wall degradation, yielding GlcNAc-6-P. The protein is N-acetyl-D-glucosamine kinase of Salmonella heidelberg (strain SL476).